We begin with the raw amino-acid sequence, 515 residues long: 2-isopropylmalate synthase (515 aa).

A Pyruvate carboxyltransferase domain is found at 4–266; sequence ISVFDTTLRD…ETGLILKEIK (263 aa). Asp13, His201, His203, and Asn237 together coordinate Mn(2+). Residues 391–515 form a regulatory domain region; the sequence is ELQTLQVNYG…AEVYGSKVEV (125 aa).

It belongs to the alpha-IPM synthase/homocitrate synthase family. LeuA type 1 subfamily. Homodimer. Mn(2+) serves as cofactor.

It is found in the cytoplasm. The catalysed reaction is 3-methyl-2-oxobutanoate + acetyl-CoA + H2O = (2S)-2-isopropylmalate + CoA + H(+). The protein operates within amino-acid biosynthesis; L-leucine biosynthesis; L-leucine from 3-methyl-2-oxobutanoate: step 1/4. Catalyzes the condensation of the acetyl group of acetyl-CoA with 3-methyl-2-oxobutanoate (2-ketoisovalerate) to form 3-carboxy-3-hydroxy-4-methylpentanoate (2-isopropylmalate). This is 2-isopropylmalate synthase from Halalkalibacterium halodurans (strain ATCC BAA-125 / DSM 18197 / FERM 7344 / JCM 9153 / C-125) (Bacillus halodurans).